Consider the following 963-residue polypeptide: Unconventional myosin-XIX (963 aa).

In terms of domain architecture, Myosin motor spans 35-758; sequence HQLDDLTKVN…MLELLECGRA (724 aa). 132-139 contacts ATP; it reads GESGAGKT. The segment at 602–624 is actin-binding; it reads LEQLLQVLHNTTPHYIRCIKPNS. IQ domains lie at 762 to 782 and 783 to 812; these read EQCARCIQCGWRRHRLQKQEK and QRRAAVLIQAAFRSWLTRKHIRRLHIAATV. Residues 829-963 are myMOMA region; it reads SKELDGMEEK…LLESHRPVQV (135 aa).

This sequence belongs to the TRAFAC class myosin-kinesin ATPase superfamily. Myosin family. As to quaternary structure, myosin is a hexamer of 2 heavy chains and 4 light chains: interacts with myosin light chains MYL9 and MYL12B.

It is found in the mitochondrion outer membrane. The protein resides in the cytoplasm. It localises to the cytoskeleton. In terms of biological role, actin-based motor molecule with ATPase activity that localizes to the mitochondrion outer membrane. Motor protein that moves towards the plus-end of actin filaments. Required for mitochondrial inheritance during mitosis. May be involved in mitochondrial transport or positioning. This is Unconventional myosin-XIX from Mus musculus (Mouse).